The chain runs to 410 residues: Translation initiation factor 2 subunit gamma (410 aa).

The tr-type G domain maps to 9–202 (QAEVNIGMVG…AIEEFIPTPK (194 aa)). Positions 18–25 (GHVDHGKT) are G1. Residues Asp21, Thr25, Gly46, and Thr48 each contribute to the Mg(2+) site. A GTP-binding site is contributed by 21–26 (DHGKTT). Residues 46–50 (GITIK) form a G2 region. Zn(2+) is bound by residues Cys61, Cys64, Cys73, and Cys76. The tract at residues 90-93 (DAPG) is G3. Residues 145 to 148 (NKIE) and 180 to 182 (SAL) contribute to the GTP site. The G4 stretch occupies residues 145–148 (NKIE). Residues 180 to 182 (SAL) are G5.

This sequence belongs to the TRAFAC class translation factor GTPase superfamily. Classic translation factor GTPase family. EIF2G subfamily. Heterotrimer composed of an alpha, a beta and a gamma chain. Mg(2+) is required as a cofactor.

It carries out the reaction GTP + H2O = GDP + phosphate + H(+). In terms of biological role, eIF-2 functions in the early steps of protein synthesis by forming a ternary complex with GTP and initiator tRNA. The sequence is that of Translation initiation factor 2 subunit gamma from Thermococcus kodakarensis (strain ATCC BAA-918 / JCM 12380 / KOD1) (Pyrococcus kodakaraensis (strain KOD1)).